The following is a 182-amino-acid chain: Small ribosomal subunit protein uS9 (182 aa).

The protein belongs to the universal ribosomal protein uS9 family.

This is Small ribosomal subunit protein uS9 from Corynebacterium glutamicum (strain R).